The following is a 247-amino-acid chain: GTP cyclohydrolase 1 type 2 homolog (247 aa).

Residues H63, H64, D101, H215, and E219 each coordinate a divalent metal cation.

Belongs to the GTP cyclohydrolase I type 2/NIF3 family. As to quaternary structure, homohexamer.

The polypeptide is GTP cyclohydrolase 1 type 2 homolog (Buchnera aphidicola subsp. Baizongia pistaciae (strain Bp)).